The primary structure comprises 628 residues: Patulin synthase (628 aa).

An N-terminal signal peptide occupies residues 1–20 (MRPIPSILGALGAFATLSAA). N-linked (GlcNAc...) asparagine glycosylation occurs at Asn-48. FAD is bound by residues 60-61 (TA) and 81-82 (EA). Asn-92 is a glycosylation site (N-linked (GlcNAc...) asparagine). 147–150 (NYMA) serves as a coordination point for FAD. N-linked (GlcNAc...) asparagine glycans are attached at residues Asn-197, Asn-260, Asn-386, Asn-429, and Asn-486. Residue His-564 is the Proton acceptor of the active site. Residues Ala-598 and 609–610 (PQ) each bind FAD.

The protein belongs to the GMC oxidoreductase family. As to quaternary structure, homodimer. FAD serves as cofactor.

The protein localises to the cytoplasm. It localises to the cell cortex. The protein resides in the vacuole. It is found in the secreted. Its subcellular location is the cell wall. The enzyme catalyses (E)-ascladiol + A = patulin + AH2. Its pathway is mycotoxin biosynthesis; patulin biosynthesis. Patulin synthase; part of the gene cluster that mediates the biosynthesis of patulin, an acetate-derived tetraketide mycotoxin produced by several fungal species that shows antimicrobial properties against several bacteria. PatE catalyzes the last step of the pathway which is the conversion of E-ascladiol to patulin. The pathway begins with the synthesis of 6-methylsalicylic acid by the polyketide synthase (PKS) patK via condensation of acetate and malonate units. The 6-methylsalicylic acid decarboxylase patG then catalyzes the decarboxylation of 6-methylsalicylic acid to yield m-cresol (also known as 3-methylphenol). These first reactions occur in the cytosol. The intermediate m-cresol is then transported into the endoplasmic reticulum where the cytochrome P450 monooxygenase patH converts it to m-hydroxybenzyl alcohol, which is further converted to gentisyl alcohol by the cytochrome P450 monooxygenase patI. The oxidoreductases patJ and patO further convert gentisyl alcohol to isoepoxydon in the vacuole. PatN catalyzes then the transformation of isoepoxydon into phyllostine. The cluster protein patF is responsible for the conversion from phyllostine to neopatulin whereas the alcohol dehydrogenase patD converts neopatulin to E-ascladiol. The steps between isoepoxydon and E-ascladiol occur in the cytosol, and E-ascladiol is probably secreted to the extracellular space by one of the cluster-specific transporters patC or patM. Finally, the secreted patulin synthase patE catalyzes the conversion of E-ascladiol to patulin. The polypeptide is Patulin synthase (Aspergillus clavatus (strain ATCC 1007 / CBS 513.65 / DSM 816 / NCTC 3887 / NRRL 1 / QM 1276 / 107)).